The primary structure comprises 221 residues: Ras-related protein Rab-28 (221 aa).

An N-acetylserine modification is found at Ser2. Residue Ser8 is modified to Phosphoserine. GTP contacts are provided by Gly21, Gly24, Lys25, Thr26, Ser27, Gly38, Lys39, Tyr41, and Thr44. Thr26 is a binding site for Mg(2+). The switch I stretch occupies residues 35–49; the sequence is ETFGKQYKQTIGLDF. Thr44 and Asp68 together coordinate Mg(2+). Positions 68 to 85 are switch II; the sequence is DIGGQTIGGKMLDKYIYG. GTP is bound by residues Gly71, Asn129, Lys130, Asp132, Ala160, and Lys161. Cys218 is subject to Cysteine methyl ester. A lipid anchor (S-farnesyl cysteine) is attached at Cys218. The propeptide at 219–221 is removed in mature form; it reads AVQ.

It belongs to the small GTPase superfamily. Rab family. Interacts (prenylated form) with PDE6D; the interaction promotes RAB28 delivery to the photoreceptor outer segments. Interacts with KCNJ13; the interaction may facilitate cone outer segments phagocytosis. Interacts with RELA; the interaction contributes to RELA transport from cytoplasm to nucleus. It depends on Mg(2+) as a cofactor. Post-translationally, isoprenylated. In terms of tissue distribution, testis, brain, and to much lower levels heart, skeletal muscle and fat cells. Expressed in the retina.

The protein resides in the cell membrane. It localises to the cytoplasm. The protein localises to the cytoskeleton. Its subcellular location is the cilium basal body. It is found in the nucleus. It carries out the reaction GTP + H2O = GDP + phosphate + H(+). Regulated by guanine nucleotide exchange factors (GEFs) which promote the exchange of bound GDP for free GTP. Regulated by GTPase activating proteins (GAPs) which increase the GTP hydrolysis activity. Inhibited by GDP dissociation inhibitors (GDIs). In terms of biological role, the small GTPases Rab are key regulators of intracellular membrane trafficking, from the formation of transport vesicles to their fusion with membranes. Rabs cycle between an inactive GDP-bound form and an active GTP-bound form that is able to recruit to membranes different sets of downstream effectors directly responsible for vesicle formation, movement, tethering and fusion. RAB28 is required for shedding and phagocytosis of cone cell outer segments (OS) discs in the retina. Also participates in nuclear factor kappa-B p65/RELA nuclear transport in endothelial cells. This is Ras-related protein Rab-28 from Rattus norvegicus (Rat).